Reading from the N-terminus, the 462-residue chain is Glycine--tRNA ligase (462 aa).

Residues Arg100 and Glu175 each coordinate substrate. Residues 207–209 (RNE), 217–222 (FRTREF), 291–292 (EL), and 335–338 (GADR) contribute to the ATP site. A substrate-binding site is contributed by 222-226 (FEQME). 331–335 (EPSLG) is a substrate binding site.

It belongs to the class-II aminoacyl-tRNA synthetase family. In terms of assembly, homodimer.

Its subcellular location is the cytoplasm. It carries out the reaction tRNA(Gly) + glycine + ATP = glycyl-tRNA(Gly) + AMP + diphosphate. Functionally, catalyzes the attachment of glycine to tRNA(Gly). This Clostridium acetobutylicum (strain ATCC 824 / DSM 792 / JCM 1419 / IAM 19013 / LMG 5710 / NBRC 13948 / NRRL B-527 / VKM B-1787 / 2291 / W) protein is Glycine--tRNA ligase.